The sequence spans 186 residues: ADP-ribosylation factor-like protein 6 (186 aa).

Gly-2 is lipidated: N-myristoyl glycine. Residues 24-31 (GLDNSGKT), Thr-50, 69-73 (DMSGQ), Gly-72, 130-133 (NKMD), and Ala-164 contribute to the GTP site. Thr-50 is a binding site for Mg(2+).

Belongs to the small GTPase superfamily. Arf family. As to expression, expressed in brain, heart and eye. Isoform 2 is expressed only in the retina.

Its subcellular location is the cell projection. It is found in the cilium membrane. The protein resides in the cytoplasm. The protein localises to the cytoskeleton. It localises to the cilium axoneme. Its subcellular location is the cilium basal body. Its function is as follows. Probably involved in membrane protein trafficking at the base of the ciliary organelle. May function in cilia biogenesis. Isoform 2 is required for proper retinal function and organization. This chain is ADP-ribosylation factor-like protein 6 (arl6), found in Danio rerio (Zebrafish).